The primary structure comprises 764 residues: FHF complex subunit HOOK interacting protein 2A (764 aa).

The interval 190-236 (SEDGPKGQDPGSGDVSQCQQPQELSGATGVEPTESEEEPPHQMDDLS) is disordered. The segment covering 203–214 (DVSQCQQPQELS) has biased composition (polar residues).

The protein belongs to the FHIP family.

Functionally, may be required for proper functioning of the nervous system. The chain is FHF complex subunit HOOK interacting protein 2A from Mus musculus (Mouse).